We begin with the raw amino-acid sequence, 1001 residues long: Serine/threonine-protein kinase TAO1-B (1001 aa).

A Protein kinase domain is found at 28–281 (FSDLREIGHG…SDELLKHMFV (254 aa)). ATP is bound by residues 34 to 42 (IGHGSFGAV) and Lys-57. Catalysis depends on Asp-151, which acts as the Proton acceptor. Disordered stretches follow at residues 324–435 (PAVE…YRNR) and 567–586 (KEELNENQSTPKKEKQEWLS). The segment covering 350-370 (SNQSIPSMSISASSQSSSVNS) has biased composition (low complexity). 2 stretches are compositionally biased toward basic and acidic residues: residues 375 to 388 (SDDKSELDMMEGDH) and 577 to 586 (PKKEKQEWLS). Coiled-coil stretches lie at residues 458–651 (SELR…EHAM) and 754–877 (KAVL…EIEA). The tract at residues 911-1001 (SHNPTGGPGP…ISNGSHMSYT (91 aa)) is disordered. Low complexity predominate over residues 921–930 (HWGHPMAGPP). 2 stretches are compositionally biased toward polar residues: residues 949 to 967 (GSVQGVSRGSTMGVRNSPQ) and 975 to 1001 (GGRTEQGMSRSTSVTSQISNGSHMSYT).

Belongs to the protein kinase superfamily. STE Ser/Thr protein kinase family. STE20 subfamily.

Its subcellular location is the cytoplasm. The enzyme catalyses L-seryl-[protein] + ATP = O-phospho-L-seryl-[protein] + ADP + H(+). It catalyses the reaction L-threonyl-[protein] + ATP = O-phospho-L-threonyl-[protein] + ADP + H(+). Its function is as follows. Serine/threonine-protein kinase involved in various processes such as p38/mapk14 stress-activated MAPK cascade, DNA damage response and regulation of cytoskeleton stability. Acts as an activator of the p38/MAPK14 stress-activated MAPK cascade by mediating phosphorylation and subsequent activation of upstream MAP kinase kinases. In response to DNA damage, involved in the G2/M transition DNA damage checkpoint by activating the p38/MAPK14 stress-activated MAPK cascade. This Xenopus laevis (African clawed frog) protein is Serine/threonine-protein kinase TAO1-B (taok1-b).